Consider the following 1302-residue polypeptide: RNA-directed RNA polymerase (1302 aa).

A RdRp catalytic domain is found at 562 to 823 (VIVGDLEATG…QTHAKQGCYV (262 aa)).

Belongs to the reoviridae RNA-directed RNA polymerase family.

The enzyme catalyses RNA(n) + a ribonucleoside 5'-triphosphate = RNA(n+1) + diphosphate. The sequence is that of RNA-directed RNA polymerase (Segment-1) from Antilocapra americana (Pronghorn).